Here is a 369-residue protein sequence, read N- to C-terminus: Flagellar P-ring protein (369 aa).

The first 23 residues, 1–23 (MRIASFFTVLLTLLTLNIAPASA), serve as a signal peptide directing secretion.

The protein belongs to the FlgI family. The basal body constitutes a major portion of the flagellar organelle and consists of four rings (L,P,S, and M) mounted on a central rod.

Its subcellular location is the periplasm. It localises to the bacterial flagellum basal body. Functionally, assembles around the rod to form the L-ring and probably protects the motor/basal body from shearing forces during rotation. This is Flagellar P-ring protein from Pectobacterium carotovorum subsp. carotovorum (strain PC1).